Here is a 76-residue protein sequence, read N- to C-terminus: RNA-binding protein KhpA (76 aa).

The KH domain maps to 29–76; it reads SLHIELSVHPDDMGKVIGKQGRTAKALRSVVYAAATKQKRRVRLDIID.

Belongs to the KhpA RNA-binding protein family. As to quaternary structure, forms a complex with KhpB.

It is found in the cytoplasm. Its function is as follows. A probable RNA chaperone. Forms a complex with KhpB which binds to cellular RNA and controls its expression. Plays a role in peptidoglycan (PG) homeostasis and cell length regulation. The protein is RNA-binding protein KhpA of Halalkalibacterium halodurans (strain ATCC BAA-125 / DSM 18197 / FERM 7344 / JCM 9153 / C-125) (Bacillus halodurans).